Here is an 891-residue protein sequence, read N- to C-terminus: Microtubule-associated protein 10 (891 aa).

4 disordered regions span residues 325–355 (AAVQ…PPQI), 401–457 (EDKG…VTKG), 504–679 (SWKG…KSSC), and 702–844 (TTEN…SNLS). The segment covering 407 to 417 (PSTKSTSPSES) has biased composition (low complexity). Composition is skewed to polar residues over residues 509-520 (VSSSAAESQMSP) and 527-544 (PTDS…SQLP). Composition is skewed to basic and acidic residues over residues 577–592 (STTK…KQEM) and 645–658 (TVDK…DGRQ). Polar residues-rich tracts occupy residues 665 to 679 (ADTS…KSSC), 702 to 718 (TTEN…SSTG), 726 to 749 (SRAS…SSVL), 776 to 790 (EASS…SQWT), and 826 to 844 (KSQS…SNLS).

In terms of assembly, interacts (via middle region) with microtubules.

Its subcellular location is the cytoplasm. It is found in the cytoskeleton. The protein resides in the spindle pole. The protein localises to the microtubule organizing center. It localises to the centrosome. Its subcellular location is the midbody. Microtubule-associated protein (MAP) that plays a role in the regulation of cell division; promotes microtubule stability and participates in the organization of the spindle midzone and normal progress of cytokinesis. The polypeptide is Microtubule-associated protein 10 (Map10) (Mus musculus (Mouse)).